Consider the following 422-residue polypeptide: S-adenosylmethionine synthase (422 aa).

Residue His16 participates in ATP binding. Residue Asp18 participates in Mg(2+) binding. Glu44 contributes to the K(+) binding site. 2 residues coordinate L-methionine: Glu57 and Gln100. Residues 100–110 form a flexible loop region; sequence QSPDISQGVSA. Residues 175-177, 251-252, Asp260, 266-267, Ala283, and Lys287 each bind ATP; these read DGK, KF, and RK. Asp260 provides a ligand contact to L-methionine. Residue Lys291 participates in L-methionine binding.

It belongs to the AdoMet synthase family. In terms of assembly, homotetramer; dimer of dimers. Mg(2+) is required as a cofactor. The cofactor is K(+).

The protein resides in the cytoplasm. The enzyme catalyses L-methionine + ATP + H2O = S-adenosyl-L-methionine + phosphate + diphosphate. The protein operates within amino-acid biosynthesis; S-adenosyl-L-methionine biosynthesis; S-adenosyl-L-methionine from L-methionine: step 1/1. Its function is as follows. Catalyzes the formation of S-adenosylmethionine (AdoMet) from methionine and ATP. The overall synthetic reaction is composed of two sequential steps, AdoMet formation and the subsequent tripolyphosphate hydrolysis which occurs prior to release of AdoMet from the enzyme. This Rippkaea orientalis (strain PCC 8801 / RF-1) (Cyanothece sp. (strain PCC 8801)) protein is S-adenosylmethionine synthase.